The sequence spans 257 residues: Acetylglutamate kinase (257 aa).

Substrate contacts are provided by residues 43-44 (GG), R65, and N157. Residues 180-185 (DISSIL) and 208-210 (IIT) contribute to the ATP site.

Belongs to the acetylglutamate kinase family. ArgB subfamily. In terms of assembly, homodimer.

The protein resides in the cytoplasm. It carries out the reaction N-acetyl-L-glutamate + ATP = N-acetyl-L-glutamyl 5-phosphate + ADP. Its pathway is amino-acid biosynthesis; L-arginine biosynthesis; N(2)-acetyl-L-ornithine from L-glutamate: step 2/4. Its function is as follows. Catalyzes the ATP-dependent phosphorylation of N-acetyl-L-glutamate. The sequence is that of Acetylglutamate kinase from Buchnera aphidicola subsp. Acyrthosiphon pisum (strain 5A).